Consider the following 27-residue polypeptide: Defensin-like protein 1 (27 aa).

Q1 bears the Pyrrolidone carboxylic acid mark.

The protein belongs to the DEFL family. In terms of assembly, forms oligomers in its native state.

Functionally, possesses antifungal activity sensitive to inorganic cations. This chain is Defensin-like protein 1, found in Brassica campestris (Field mustard).